Here is a 169-residue protein sequence, read N- to C-terminus: Ribosome maturation factor RimM (169 aa).

A PRC barrel domain is found at glutamate 95 to tyrosine 169.

It belongs to the RimM family. In terms of assembly, binds ribosomal protein uS19.

The protein resides in the cytoplasm. An accessory protein needed during the final step in the assembly of 30S ribosomal subunit, possibly for assembly of the head region. Essential for efficient processing of 16S rRNA. May be needed both before and after RbfA during the maturation of 16S rRNA. It has affinity for free ribosomal 30S subunits but not for 70S ribosomes. This Nitrosomonas europaea (strain ATCC 19718 / CIP 103999 / KCTC 2705 / NBRC 14298) protein is Ribosome maturation factor RimM.